Here is a 349-residue protein sequence, read N- to C-terminus: uncharacterized protein (349 aa).

A compositionally biased stretch (polar residues) spans 116–135 (HFSQTNPKSTPEPPCTSSSG). The disordered stretch occupies residues 116-148 (HFSQTNPKSTPEPPCTSSSGAGDCHENLPADGY).

This is an uncharacterized protein from Caenorhabditis elegans.